Consider the following 1871-residue polypeptide: Girdin (1871 aa).

Residues 12–132 (QFMTSPLVTW…KLLLLLLGCA (121 aa)) enclose the Calponin-homology (CH) domain. The stretch at 196–425 (HLKRLIDERD…EMAQKQSMDE (230 aa)) forms a coiled coil. Phosphoserine occurs at positions 233, 237, and 449. Residues 458-1385 (TSSRLLKLEM…KIMDQYKFYD (928 aa)) adopt a coiled-coil conformation. Disordered stretches follow at residues 816 to 842 (ENKS…KRLR) and 1010 to 1035 (RQDE…RESQ). The residue at position 1020 (Ser1020) is a Phosphoserine. The segment covering 1026-1035 (EDNKWERESQ) has biased composition (basic and acidic residues). Phosphoserine is present on Ser1387. The tract at residues 1390-1408 (RRRGNWITLKMRKLIKSKK) is phosphoinositide-binding. Positions 1407 to 1416 (KKDINRERQK) are enriched in basic and acidic residues. 2 disordered regions span residues 1407-1459 (KKDI…LGTK) and 1559-1601 (TTSF…SNNN). A Phosphoserine; by PKB/AKT1 modification is found at Ser1417. Composition is skewed to polar residues over residues 1417–1430 (SLTL…SSEG), 1445–1459 (VGSN…LGTK), and 1559–1578 (TTSF…STGS). At Thr1421 the chain carries Phosphothreonine. Residues 1672 to 1702 (KTGSPGSEVVTLQQFLEESNKLTSVQIKSSS) carry the GBA motif. Position 1673 is a phosphothreonine (Thr1673). Ser1675 carries the phosphoserine modification. Ser1690 carries the post-translational modification Phosphoserine; by PKC/PRKCQ. An SH2-like; required for interaction with growth factor receptors region spans residues 1713–1823 (SLSVSSDFLG…GTTRRTSIHD (111 aa)). Ser1717 bears the Phosphoserine mark. The interval 1736-1871 (SGKTPGDFYD…KSRSREQQSS (136 aa)) is disordered. The segment covering 1743–1763 (FYDRRTTKPEFLRPGPRKTED) has biased composition (basic and acidic residues). Phosphotyrosine is present on residues Tyr1765 and Tyr1799. Composition is skewed to polar residues over residues 1787-1799 (SSLS…SNPY) and 1807-1818 (SVISTAEGTTRR). A phosphoserine mark is found at Ser1820 and Ser1837. The span at 1820–1830 (SIHDFLTKDSR) shows a compositional bias: basic and acidic residues. Residues 1838–1851 (PPAAADSNTTAASN) are compositionally biased toward low complexity. Residues 1854-1871 (KVQESRNSKSRSREQQSS) are compositionally biased toward basic and acidic residues.

The protein belongs to the CCDC88 family. In terms of assembly, homodimer. Interacts (via GBA motif) with guanine nucleotide-binding protein G(i) alpha subunits GNAI1, GNAI2 and GNAI3. Also interacts (via GNA motif) with guanine nucleotide-binding protein G(s) alpha subunit GNAS. Interaction with G(i) alpha subunits occurs before interaction with GNAS and is regulated by phosphorylation; phosphorylation at Ser-1675 enhances binding to G(i) alpha subunits while phosphorylation at Ser-1690 abolishes G(i) alpha subunit binding, promoting binding to GNAS. Interacts (via C-terminal SH2-like region) with growth factor receptors EGFR, INSR and KDR/VEGFR2 (via their autophosphorylated cytoplasmic tails). Forms a complex with EGFR and GNAI3 which leads to enhanced EGFR signaling and triggering of cell migration; ligand stimulation is required for recruitment of GNAI3 to the complex. Interacts (tyrosine-phosphorylated form) with phosphatidylinositol 3-kinase (PI3K) regulatory subunit PIK3R1/p85a (via SH2 domains); the interaction enables recruitment of PIK3R1 to the EGFR receptor, enhancing PI3K activity and cell migration. Interacts with serine/threonine-protein kinase PRKCQ; the interaction leads to phosphorylation of CCDC88A and inhibition of its guanine nucleotide exchange factor activity. Interacts (via C-terminus) with DISC1; the interaction is direct. Interacts with AKT proteins; the interaction is inhibited in the presence of DISC1. Interacts with AKT1/PKB (via C-terminus). The non-phosphorylated form interacts with phosphatidylinositol 4-phosphate [PI(4)P] and weakly with phosphatidylinositol 3-phosphate [PI(3)P]. Interacts with microtubules. Interacts with actin. In terms of processing, phosphorylation is induced by epidermal growth factor (EGF) in a phosphoinositide 3-kinase (PI3K)-dependent manner. Phosphorylation by AKT1/PKB is necessary for delocalization from the cell membrane and for cell migration. Phosphorylated on tyrosine residues which promotes binding to phosphatidylinositol 3-kinase (PI3K) regulatory subunit PIK3R1/p85a and enhances PI3K activity. Tyrosine-phosphorylated by both receptor and non-receptor tyrosine kinases in vitro. Tyrosine phosphorylation is required for AKT1-dependent phosphorylation of Ser-1417. Phosphorylation at Ser-1690 by PRKCQ disrupts interaction with GNAI3 and inhibits guanine nucleotide exchange factor activity. As to expression, expressed ubiquitously.

The protein resides in the cell membrane. It is found in the cytoplasm. It localises to the cytosol. The protein localises to the cytoplasmic vesicle. Its subcellular location is the cell projection. The protein resides in the lamellipodium. It is found in the cytoskeleton. It localises to the cilium basal body. The protein localises to the microtubule organizing center. Its subcellular location is the centrosome. The protein resides in the centriole. Functionally, bifunctional modulator of guanine nucleotide-binding proteins (G proteins). Acts as a non-receptor guanine nucleotide exchange factor which binds to and activates guanine nucleotide-binding protein G(i) alpha subunits. Also acts as a guanine nucleotide dissociation inhibitor for guanine nucleotide-binding protein G(s) subunit alpha GNAS. Essential for cell migration. Interacts in complex with G(i) alpha subunits with the EGFR receptor, retaining EGFR at the cell membrane following ligand stimulation and promoting EGFR signaling which triggers cell migration. Binding to Gi-alpha subunits displaces the beta and gamma subunits from the heterotrimeric G-protein complex which enhances phosphoinositide 3-kinase (PI3K)-dependent phosphorylation and kinase activity of AKT1/PKB. Phosphorylation of AKT1/PKB induces the phosphorylation of downstream effectors GSK3 and FOXO1/FKHR, and regulates DNA replication and cell proliferation. Binds in its tyrosine-phosphorylated form to the phosphatidylinositol 3-kinase (PI3K) regulatory subunit PIK3R1 which enables recruitment of PIK3R1 to the EGFR receptor, enhancing PI3K activity and cell migration. Plays a role as a key modulator of the AKT-mTOR signaling pathway, controlling the tempo of the process of newborn neuron integration during adult neurogenesis, including correct neuron positioning, dendritic development and synapse formation. Inhibition of G(s) subunit alpha GNAS leads to reduced cellular levels of cAMP and suppression of cell proliferation. Essential for the integrity of the actin cytoskeleton. Required for formation of actin stress fibers and lamellipodia. May be involved in membrane sorting in the early endosome. Plays a role in ciliogenesis and cilium morphology and positioning and this may partly be through regulation of the localization of scaffolding protein CROCC/Rootletin. The chain is Girdin (CCDC88A) from Homo sapiens (Human).